Reading from the N-terminus, the 527-residue chain is DNA polymerase epsilon subunit 2 (527 aa).

The protein belongs to the DNA polymerase epsilon subunit B family. Component of the DNA polymerase epsilon complex consisting of four subunits: the catalytic subunit POLE and the accessory subunits POLE2, POLE3 and POLE4.

The protein localises to the nucleus. Accessory component of the DNA polymerase epsilon complex. Participates in DNA repair and in chromosomal DNA replication. In Bos taurus (Bovine), this protein is DNA polymerase epsilon subunit 2 (POLE2).